The primary structure comprises 102 residues: Small ribosomal subunit protein uS10 (102 aa).

This sequence belongs to the universal ribosomal protein uS10 family. As to quaternary structure, part of the 30S ribosomal subunit.

Functionally, involved in the binding of tRNA to the ribosomes. The polypeptide is Small ribosomal subunit protein uS10 (Fervidobacterium nodosum (strain ATCC 35602 / DSM 5306 / Rt17-B1)).